Consider the following 996-residue polypeptide: KK-1 biosynthesis cluster protein D (996 aa).

Disordered stretches follow at residues 307–333, 425–449, 489–556, and 571–602; these read HDTD…PELD, EQDN…ARDL, AGVA…ALRA, and STHS…SLHS. 2 stretches are compositionally biased toward polar residues: residues 318–329 and 428–439; these read PIRSNKLSQSKQ and NQTNEEGTGEVQ. Composition is skewed to basic and acidic residues over residues 440-449 and 500-527; these read SQRDRRARDL and RAAE…DKAA. The span at 572 to 590 shows a compositional bias: polar residues; the sequence is THSIHQRASVNTTAPTVAR.

It participates in secondary metabolite biosynthesis. In terms of biological role, part of the gene cluster that mediates the biosynthesis of KK-1, a novel cyclic depsipeptide with 10 residues which is a promising active compound with high activity against many plant pathogens, especially Botrytis cinerea. The role of kk1D in KK-1 biosynthesis has still to be determined. The nonribosomal peptide synthetase (NRPS) kk1B catalyzes the elongation and cyclization of the decapeptide chain composed of 1 D-lactic acid residue (D-Lac), 1 pipecolic acid residue (Pip), 1 aspartic acid residue (Asp), 1 isoleucine residue (Ile), 1 glycine residue (Gly), 1 tyrosine residue (Tyr) and 4 valine residues (Val). The Asp, Ile and 3 Val residues are N-methylated by the 5 methyltransferase domains from the NRPS (found in modules 3, 5, 6, 7 and 9), whereas the Tyr residue is O-methylated by the cluster encoded O-methyltransferase kk1A. The thioesterase kk1J is likely to be involved in the corrective mechanism of peptide chain synthesis. The D-lactate dehydrogenase kk1H is involved in the synthesis of D-lactic acid from pyruvic acid, which is recognized by the A domain of the first kk1B module. The pyrroline-5-carboxylate reductase kk1I is involved in the synthesis of the L-pipecolic acid residue of KK-1 from delta-1-pyrroline-5-carboxylate (P5C), a metabolic intermediate of lysine. It is still unclear how kk1C and kk1D are involved in the production of KK-1. This is KK-1 biosynthesis cluster protein D from Curvularia clavata.